The following is a 199-amino-acid chain: Ribonuclease HII (199 aa).

The RNase H type-2 domain maps to 11-199 (SRVAGVDEVG…RRSFLRRLLG (189 aa)). Positions 17, 18, and 113 each coordinate a divalent metal cation.

This sequence belongs to the RNase HII family. The cofactor is Mn(2+). Requires Mg(2+) as cofactor.

The protein resides in the cytoplasm. It catalyses the reaction Endonucleolytic cleavage to 5'-phosphomonoester.. Its function is as follows. Endonuclease that specifically degrades the RNA of RNA-DNA hybrids. The sequence is that of Ribonuclease HII from Synechococcus sp. (strain CC9902).